Here is a 326-residue protein sequence, read N- to C-terminus: DNA-directed RNA polymerase subunit alpha (326 aa).

Residues 1–231 (MQSNSLLKPR…DQLSVFADLE (231 aa)) are alpha N-terminal domain (alpha-NTD). An alpha C-terminal domain (alpha-CTD) region spans residues 245–326 (IDPVLLRPVD…WPPAGLEKLG (82 aa)).

The protein belongs to the RNA polymerase alpha chain family. As to quaternary structure, homodimer. The RNAP catalytic core consists of 2 alpha, 1 beta, 1 beta' and 1 omega subunit. When a sigma factor is associated with the core the holoenzyme is formed, which can initiate transcription.

It carries out the reaction RNA(n) + a ribonucleoside 5'-triphosphate = RNA(n+1) + diphosphate. In terms of biological role, DNA-dependent RNA polymerase catalyzes the transcription of DNA into RNA using the four ribonucleoside triphosphates as substrates. The sequence is that of DNA-directed RNA polymerase subunit alpha from Aromatoleum aromaticum (strain DSM 19018 / LMG 30748 / EbN1) (Azoarcus sp. (strain EbN1)).